The sequence spans 309 residues: Dicarboxylate carrier UCP2 (309 aa).

The Mitochondrial intermembrane portion of the chain corresponds to 1–16 (MVGFKATDVPPTATVK). Solcar repeat units follow at residues 11–106 (PTAT…VKQF), 114–203 (AGIG…IKDA), and 212–297 (DDLP…LKRA). The interval 16-63 (KFLGAGTAACIADLITFPLDTAKVRLQIQGERQGPVRAAASAQYRGVL) is important for interaction with long-chain fatty acids. Residues 17–40 (FLGAGTAACIADLITFPLDTAKVR) traverse the membrane as a helical segment. The Mitochondrial matrix segment spans residues 41–77 (LQIQGERQGPVRAAASAQYRGVLCTILTMVRTEGPRS). A helical transmembrane segment spans residues 78–103 (LYSGLVAGLQRQMSFASVRIGLYDSV). Residues 104 to 119 (KQFYTKGSEHAGIGSR) lie on the Mitochondrial intermembrane side of the membrane. Residues 120 to 145 (LLAGSTTGALAVAVAQPTDVVKVRFQ) traverse the membrane as a helical segment. At 146-173 (AQARAGSGRRYQSTVDAYKTIAREEGFR) the chain is on the mitochondrial matrix side. The helical transmembrane segment at 174-199 (GLWKGTSPNVARNAIVNCAELVTYDL) threads the bilayer. Topologically, residues 200-217 (IKDALLKANLMTDDLPCH) are mitochondrial intermembrane. Residues 218–242 (FTSAFGAGFCTTVIASPVDVVKTRY) form a helical membrane-spanning segment. Over 243 to 268 (MNSALGQYSSAGHCALTMLQKEGPRA) the chain is Mitochondrial matrix. The helical transmembrane segment at 269–294 (FYKGFMPSFLRLGSWNVVMFVTYEQL) threads the bilayer. Residues 278–285 (LRLGSWNV) are important for interaction with long-chain fatty acids. The Mitochondrial intermembrane segment spans residues 295–309 (KRALMAACTSREAPF).

Belongs to the mitochondrial carrier (TC 2.A.29) family. In terms of assembly, homotetramer. Adopts an asymmetrical dimer of dimers functional form. Interacts with MICU1 (when methylated); leading to decrease the calcium sensitivity of MICU1.

The protein localises to the mitochondrion inner membrane. It catalyses the reaction L-aspartate(out) + phosphate(in) + H(+)(in) = L-aspartate(in) + phosphate(out) + H(+)(out). It carries out the reaction oxaloacetate(out) + phosphate(in) + H(+)(in) = oxaloacetate(in) + phosphate(out) + H(+)(out). The enzyme catalyses (S)-malate(out) + phosphate(in) + H(+)(in) = (S)-malate(in) + phosphate(out) + H(+)(out). The catalysed reaction is malonate(out) + phosphate(in) + H(+)(in) = malonate(in) + phosphate(out) + H(+)(out). It catalyses the reaction sulfate(out) + phosphate(in) + H(+)(in) = sulfate(in) + phosphate(out) + H(+)(out). It carries out the reaction (S)-malate(out) = (S)-malate(in). The enzyme catalyses L-aspartate(out) = L-aspartate(in). The catalysed reaction is phosphate(in) = phosphate(out). It catalyses the reaction chloride(in) = chloride(out). It carries out the reaction H(+)(in) = H(+)(out). The enzyme catalyses a long-chain fatty acid(out) = a long-chain fatty acid(in). Antiporter that exports dicarboxylate intermediates of the Krebs cycle in exchange for phosphate plus a proton across the inner membrane of mitochondria, a process driven by mitochondrial motive force with an overall impact on glycolysis, glutaminolysis and glutathione-dependent redox balance. Continuous export of oxaloacetate and related four-carbon dicarboxylates from mitochondrial matrix into the cytosol negatively regulates the oxidation of acetyl-CoA substrates via the Krebs cycle lowering the ATP/ADP ratio and reactive oxygen species (ROS) production. May mediate inducible proton entry into the mitochondrial matrix affecting ATP turnover as a protection mechanism against oxidative stress. The proton currents are most likely associated with fatty acid flipping across the inner membrane of mitochondria in a metabolic process regulated by free fatty acids and purine nucleotides. Regulates the use of glucose as a source of energy. Required for glucose-induced DRP1-dependent mitochondrial fission and neuron activation in the ventromedial nucleus of the hypothalamus (VMH). This mitochondrial adaptation mechanism modulates the VMH pool of glucose-excited neurons with an impact on systemic glucose homeostasis. Regulates ROS levels and metabolic reprogramming of macrophages during the resolution phase of inflammation. Attenuates ROS production in response to IL33 to preserve the integrity of the Krebs cycle required for persistent production of itaconate and subsequent GATA3-dependent differentiation of inflammation-resolving alternatively activated macrophages. Can unidirectionally transport anions including L-malate, L-aspartate, phosphate and chloride ions. Does not mediate adaptive thermogenesis. The protein is Dicarboxylate carrier UCP2 (UCP2) of Canis lupus familiaris (Dog).